Here is a 322-residue protein sequence, read N- to C-terminus: Malate dehydrogenase (322 aa).

Residues 10-15 (GSGMIG) and Asp34 contribute to the NAD(+) site. Substrate-binding residues include Arg83 and Arg89. NAD(+) is bound by residues Asn96 and 119–121 (ITN). Substrate is bound by residues Asn121 and Arg152. The active-site Proton acceptor is the His176.

The protein belongs to the LDH/MDH superfamily. MDH type 3 family.

The enzyme catalyses (S)-malate + NAD(+) = oxaloacetate + NADH + H(+). In terms of biological role, catalyzes the reversible oxidation of malate to oxaloacetate. The protein is Malate dehydrogenase of Mesorhizobium japonicum (strain LMG 29417 / CECT 9101 / MAFF 303099) (Mesorhizobium loti (strain MAFF 303099)).